We begin with the raw amino-acid sequence, 435 residues long: Serine--tRNA ligase (435 aa).

242–244 (TAE) is a binding site for L-serine. 273–275 (RSE) contacts ATP. Position 296 (Glu296) interacts with L-serine. 360–363 (EISS) lines the ATP pocket. Residue Ser396 coordinates L-serine.

Belongs to the class-II aminoacyl-tRNA synthetase family. Type-1 seryl-tRNA synthetase subfamily. As to quaternary structure, homodimer. The tRNA molecule binds across the dimer.

Its subcellular location is the cytoplasm. The enzyme catalyses tRNA(Ser) + L-serine + ATP = L-seryl-tRNA(Ser) + AMP + diphosphate + H(+). It carries out the reaction tRNA(Sec) + L-serine + ATP = L-seryl-tRNA(Sec) + AMP + diphosphate + H(+). Its pathway is aminoacyl-tRNA biosynthesis; selenocysteinyl-tRNA(Sec) biosynthesis; L-seryl-tRNA(Sec) from L-serine and tRNA(Sec): step 1/1. Catalyzes the attachment of serine to tRNA(Ser). Is also able to aminoacylate tRNA(Sec) with serine, to form the misacylated tRNA L-seryl-tRNA(Sec), which will be further converted into selenocysteinyl-tRNA(Sec). This Vibrio vulnificus (strain CMCP6) protein is Serine--tRNA ligase.